Reading from the N-terminus, the 385-residue chain is Serine/threonine-protein kinase 52 (385 aa).

The Protein kinase domain maps to 82-356 (LIIKTVLARG…PEMDEVVPML (275 aa)). ATP is bound by residues 88–96 (LARGTFGTV) and Lys109. The active-site Proton acceptor is the Asp227.

The protein belongs to the protein kinase superfamily. Ser/Thr protein kinase family. Binds to CBC1. Associates with PHOT1, PHOT2, BLUS1 and PM H(+)-ATPase (e.g. AHA1). Post-translationally, autophosphorylated. Phosphorylated by HT1 in response to low CO(2) concentrations. As to expression, expressed in guard cells.

The protein resides in the cytoplasm. It is found in the cytosol. It carries out the reaction L-seryl-[protein] + ATP = O-phospho-L-seryl-[protein] + ADP + H(+). It catalyses the reaction L-threonyl-[protein] + ATP = O-phospho-L-threonyl-[protein] + ADP + H(+). Functionally, serine/threonine protein kinase that phosphorylates proteins on serine and threonine residues. Collectively with CBC1, acts as a negative regulator of stomatal opening, probably via the inhibition of plasma membrane-type ATPases (AHA1 and AHA2) activity in guard cells, but in an abscisic acid (ABA)-independent manner. However, at low concentrations of CO(2), together with CBC1, stimulates stomatal opening via the inhibition of S-type anion channels in response to blue light (BL) and red light (RL), thus being a key component to maximize photosynthesis in the light under low CO(2) conditions. Required for temperature decrease in leaves. Downstream target of HIGH LEAF TEMPERATURE1 (HT1) during low CO(2)-induced stomatal opening. The chain is Serine/threonine-protein kinase 52 from Arabidopsis thaliana (Mouse-ear cress).